Consider the following 393-residue polypeptide: MPKKKPTPIQLNPAPDGSAVNGTSSAETNLEALQKKLEELELDEQQRKRLEAFLTQKQKVGELKDDDFEKISELGAGNGGVVFKVSHKPSGLVMARKLIHLEIKPAIRNQIIRELQVLHECNSPYIVGFYGAFYSDGEISICMEHMDGGSLDQVLKKAGRIPEQILGKVSIAVIKGLTYLREKHKIMHRDVKPSNILVNSRGEIKLCDFGVSGQLIDSMANSFVGTRSYMSPERLQGTHYSVQSDIWSMGLSLVEMAVGRYPIPPPDAKELELMFGCQVEGDAAETPPRPRTPGRPLSSYGMDSRPPMAIFELLDYIVNEPPPKLPSAVFSLEFQDFVNKCLIKNPAERADLKQLMVHAFIKRSDAEEVDFAGWLCSTIGLNQPSTPTHAAGV.

Residues 1 to 27 (MPKKKPTPIQLNPAPDGSAVNGTSSAE) are disordered. Positions 68–361 (FEKISELGAG…LKQLMVHAFI (294 aa)) constitute a Protein kinase domain. ATP is bound by residues 74–82 (LGAGNGGVV) and Lys-97. The active-site Proton acceptor is Asp-190. Residues Ser-218 and Ser-222 each carry the phosphoserine; by RAF modification. Residues 270-307 (ELELMFGCQVEGDAAETPPRPRTPGRPLSSYGMDSRPP) form an RAF1-binding region. Phosphothreonine is present on Thr-286. Thr-292 bears the Phosphothreonine; by MAPK1 mark. A Phosphoserine; by PAK modification is found at Ser-298.

The protein belongs to the protein kinase superfamily. STE Ser/Thr protein kinase family. MAP kinase kinase subfamily. Found in a complex with at least BRAF, HRAS, MAP2K1, MAPK3/ERK1 and RGS14. Forms a heterodimer with MAP2K2/MEK2. Forms heterodimers with KSR2 which further dimerize to form tetramers. Interacts with KSR1 or KSR2 and BRAF; the interaction with KSR1 or KSR2 mediates KSR1-BRAF or KSR2-BRAF dimerization. Interacts with ARBB2, LAMTOR3, MAPK1/ERK2 and RAF1. Interacts with MAPK1/ERK2. Interacts with MORG1. Interacts with PPARG. Interacts with SGK1. Interacts with BIRC6/bruce. Interacts with KAT7; the interaction promotes KAT7 phosphorylation. Interacts with RAF1 and NEK10; the interaction is required for ERK1/2-signaling pathway activation in response to UV irradiation. Interacts with TRAF3IP3. Interacts with MOS. In terms of processing, phosphorylation at Ser-218 and Ser-222 by MAP kinase kinase kinases (RAF or MEKK1) positively regulates the kinase activity. Also phosphorylated at Thr-292 by MAPK1/ERK2 and at Ser-298 by PAK. MAPK1/ERK2 phosphorylation of Thr-292 occurs in response to cellular adhesion and leads to inhibition of Ser-298 phosphorylation by PAK. Autophosphorylated at Ser-218 and Ser-222, autophosphosphorylation is promoted by NEK10 following UV irradiation.

The protein localises to the cytoplasm. The protein resides in the cytoskeleton. It is found in the microtubule organizing center. Its subcellular location is the centrosome. It localises to the spindle pole body. The protein localises to the nucleus. The protein resides in the membrane. It carries out the reaction L-seryl-[protein] + ATP = O-phospho-L-seryl-[protein] + ADP + H(+). The enzyme catalyses L-threonyl-[protein] + ATP = O-phospho-L-threonyl-[protein] + ADP + H(+). The catalysed reaction is L-tyrosyl-[protein] + ATP = O-phospho-L-tyrosyl-[protein] + ADP + H(+). Ras proteins such as HRAS mediate the activation of RAF proteins such as RAF1 or BRAF which in turn activate extracellular signal-regulated kinases (ERK) through MAPK (mitogen-activated protein kinases) and ERK kinases MAP2K1/MEK1 and MAP2K2/MEK2. Activation occurs through phosphorylation of Ser-218 and Ser-222. MAP2K1/MEK1 binds KSR1 or KSR2 releasing the inhibitory intramolecular interaction between KSR1 or KSR2 protein kinase and N-terminal domains. This allows KSR1 or KSR2 dimerization with BRAF leading to BRAF activation and phosphorylation of MAP2K1. MAP2K1/MEK1 is also the target of negative feed-back regulation by its substrate kinases, such as MAPK1/ERK2. These phosphorylate MAP2K1/MEK1 on Thr-292, thereby facilitating dephosphorylation of the activating residues Ser-218 and Ser-222. Inhibited by serine/threonine phosphatase 2A. Dual specificity protein kinase which acts as an essential component of the MAP kinase signal transduction pathway. Binding of extracellular ligands such as growth factors, cytokines and hormones to their cell-surface receptors activates RAS and this initiates RAF1 activation. RAF1 then further activates the dual-specificity protein kinases MAP2K1/MEK1 and MAP2K2/MEK2. Both MAP2K1/MEK1 and MAP2K2/MEK2 function specifically in the MAPK/ERK cascade, and catalyze the concomitant phosphorylation of a threonine and a tyrosine residue in a Thr-Glu-Tyr sequence located in the extracellular signal-regulated kinases MAPK3/ERK1 and MAPK1/ERK2, leading to their activation and further transduction of the signal within the MAPK/ERK cascade. Activates BRAF in a KSR1 or KSR2-dependent manner; by binding to KSR1 or KSR2 releases the inhibitory intramolecular interaction between KSR1 or KSR2 protein kinase and N-terminal domains which promotes KSR1 or KSR2-BRAF dimerization and BRAF activation. Depending on the cellular context, this pathway mediates diverse biological functions such as cell growth, adhesion, survival and differentiation, predominantly through the regulation of transcription, metabolism and cytoskeletal rearrangements. One target of the MAPK/ERK cascade is peroxisome proliferator-activated receptor gamma (PPARG), a nuclear receptor that promotes differentiation and apoptosis. MAP2K1/MEK1 has been shown to export PPARG from the nucleus. The MAPK/ERK cascade is also involved in the regulation of endosomal dynamics, including lysosome processing and endosome cycling through the perinuclear recycling compartment (PNRC), as well as in the fragmentation of the Golgi apparatus during mitosis. The protein is Dual specificity mitogen-activated protein kinase kinase 1 (MAP2K1) of Oryctolagus cuniculus (Rabbit).